A 121-amino-acid polypeptide reads, in one-letter code: Small ribosomal subunit protein uS13 (121 aa).

Positions 93–121 (RGLPVRGQNSKNNARTRKGPRRTVANKKK) are disordered. Over residues 106 to 121 (ARTRKGPRRTVANKKK) the composition is skewed to basic residues.

The protein belongs to the universal ribosomal protein uS13 family. As to quaternary structure, part of the 30S ribosomal subunit. Forms a loose heterodimer with protein S19. Forms two bridges to the 50S subunit in the 70S ribosome.

In terms of biological role, located at the top of the head of the 30S subunit, it contacts several helices of the 16S rRNA. In the 70S ribosome it contacts the 23S rRNA (bridge B1a) and protein L5 of the 50S subunit (bridge B1b), connecting the 2 subunits; these bridges are implicated in subunit movement. Contacts the tRNAs in the A and P-sites. This Bacillus subtilis (strain 168) protein is Small ribosomal subunit protein uS13.